The following is a 91-amino-acid chain: YcgL domain-containing protein Ent638_2370 (91 aa).

A YcgL domain is found at 1–85 (MFCVIYRSAK…PPENLLKQHL (85 aa)).

The chain is YcgL domain-containing protein Ent638_2370 from Enterobacter sp. (strain 638).